We begin with the raw amino-acid sequence, 504 residues long: uncharacterized protein (504 aa).

Residues 26 to 46 (ILFLLLGLIILVNISINVTTV) traverse the membrane as a helical segment. A compositionally biased stretch (polar residues) spans 103-112 (PTQCSSSSTH). Disordered regions lie at residues 103-180 (PTQC…TRPM), 313-402 (YDAR…PLTT), and 431-504 (QRLA…GKLN). A compositionally biased stretch (basic residues) spans 113-128 (YFRKHSNDRRSRRRYC). Over residues 135 to 147 (QIRQSNQQQSCHS) the composition is skewed to polar residues. The span at 313–324 (YDARDQWRRGTE) shows a compositional bias: basic and acidic residues. The span at 349-377 (SSQAHRQNFPSYTHSQPNHSPPQSVGYSS) shows a compositional bias: polar residues. Composition is skewed to basic and acidic residues over residues 378-389 (RESHEVRRRAPD) and 467-478 (LELKRQVQENRG). Residues 494–504 (SLHRSRTGKLN) show a composition bias toward basic residues.

It is found in the membrane. This is an uncharacterized protein from Rattus norvegicus (Rat).